The sequence spans 61 residues: UPF0434 protein PSEEN1604 (61 aa).

It belongs to the UPF0434 family.

The chain is UPF0434 protein PSEEN1604 from Pseudomonas entomophila (strain L48).